The following is a 335-amino-acid chain: Partner of xrn-2 protein 1 (335 aa).

In terms of domain architecture, XRN2-binding (XTBD) spans 7–91 (VEAEKKLWES…SYVKASAAKK (85 aa)). A disordered region spans residues 95–119 (VKTSDLEGASDESKKVKMEKSPSPV). Basic and acidic residues predominate over residues 105-114 (DESKKVKMEK).

Interacts (via N-terminus) with xrn-2; the interaction is direct.

Its subcellular location is the nucleus. It localises to the nucleolus. The protein resides in the nucleoplasm. Functionally, plays a role in maintenance of steady-state concentration and turnover of microRNAs (miRNA) by degradation of mature miRNA in complex with the exoribonuclease xrn-2. Stabilizes and enhances the accumulation and activity of the exoribonuclease xrn-2, and thus contributes to miRNA turnover. This is Partner of xrn-2 protein 1 from Caenorhabditis elegans.